The chain runs to 397 residues: Succinate--CoA ligase [ADP-forming] subunit beta (397 aa).

The region spanning 9–253 (KEILASYGVR…IREENPIEVE (245 aa)) is the ATP-grasp domain. ATP contacts are provided by residues lysine 50, 57–59 (GRG), valine 106, and glutamate 116. Mg(2+) contacts are provided by asparagine 208 and aspartate 222. Residues asparagine 273 and 330–332 (GIV) each bind substrate.

This sequence belongs to the succinate/malate CoA ligase beta subunit family. As to quaternary structure, heterotetramer of two alpha and two beta subunits. Requires Mg(2+) as cofactor.

The enzyme catalyses succinate + ATP + CoA = succinyl-CoA + ADP + phosphate. It carries out the reaction GTP + succinate + CoA = succinyl-CoA + GDP + phosphate. It functions in the pathway carbohydrate metabolism; tricarboxylic acid cycle; succinate from succinyl-CoA (ligase route): step 1/1. Its function is as follows. Succinyl-CoA synthetase functions in the citric acid cycle (TCA), coupling the hydrolysis of succinyl-CoA to the synthesis of either ATP or GTP and thus represents the only step of substrate-level phosphorylation in the TCA. The beta subunit provides nucleotide specificity of the enzyme and binds the substrate succinate, while the binding sites for coenzyme A and phosphate are found in the alpha subunit. The sequence is that of Succinate--CoA ligase [ADP-forming] subunit beta from Flavobacterium johnsoniae (strain ATCC 17061 / DSM 2064 / JCM 8514 / BCRC 14874 / CCUG 350202 / NBRC 14942 / NCIMB 11054 / UW101) (Cytophaga johnsonae).